The primary structure comprises 155 residues: Ribosomal RNA large subunit methyltransferase H (155 aa).

Residues Leu-72, Gly-103, and 122 to 127 (LSDLTL) each bind S-adenosyl-L-methionine.

The protein belongs to the RNA methyltransferase RlmH family. Homodimer.

It is found in the cytoplasm. The enzyme catalyses pseudouridine(1915) in 23S rRNA + S-adenosyl-L-methionine = N(3)-methylpseudouridine(1915) in 23S rRNA + S-adenosyl-L-homocysteine + H(+). Functionally, specifically methylates the pseudouridine at position 1915 (m3Psi1915) in 23S rRNA. This chain is Ribosomal RNA large subunit methyltransferase H, found in Variovorax paradoxus (strain S110).